The following is a 375-amino-acid chain: DNA replication and repair protein RecF (375 aa).

Residue 30-37 (GENAQGKT) participates in ATP binding.

It belongs to the RecF family.

It is found in the cytoplasm. The RecF protein is involved in DNA metabolism; it is required for DNA replication and normal SOS inducibility. RecF binds preferentially to single-stranded, linear DNA. It also seems to bind ATP. The polypeptide is DNA replication and repair protein RecF (Bacillus cereus (strain G9842)).